The chain runs to 1091 residues: Protein CTR9 homolog (1091 aa).

N-acetylalanine is present on alanine 2. TPR repeat units lie at residues 90 to 127 (GAYY…DMHE), 128 to 161 (PSTW…APDN), 163 to 195 (PALL…FPGC), 197 to 230 (AAVR…DPDN), 232 to 267 (EALV…YPYC), 305 to 338 (SHSF…TNNN), 343 to 376 (VFPY…YPDN), 377 to 410 (CETL…DPRD), 412 to 443 (QAFV…MKKG), 449 to 482 (IEVL…GIWI), 558 to 591 (IDAY…DDKN), 593 to 625 (NALS…TDGK), 640 to 673 (AAMR…HNSN), 674 to 707 (MYAA…ASGS), 713 to 746 (PDVW…FFYN), and 749 to 782 (SQIL…TPSN). The tract at residues 919–1091 (FQRIKEQWKS…EEEEEEEEAN (173 aa)) is disordered. The segment covering 951-965 (ERRRKKGGKRRKKDK) has biased composition (basic residues). Composition is skewed to acidic residues over residues 974–993 (DDEE…DEDA), 1003–1016 (MTTQ…DDDA), 1026–1035 (EDPDVDDDEV), and 1080–1091 (NMEEEEEEEEAN).

In terms of assembly, component of the nuclear PAF1 complex (PAF1C), which consists of VIP2/ELF7/PAF1, VIP3/SKI8/WDR61, VIP4/LEO1, VIP5/RTF1, VIP6/ELF8/CTR9 and CDC73. Interacts with VIP3 and VIP4. Expressed in roots, leaves and shoot apex.

The protein localises to the nucleus. Component of the PAF1 complex (PAF1C) which is involved in histone modifications such as methylation on histone H3 'Lys-4' (H3K4me3). Involved in regulation of flowering time. Required for the expression of the MADS box genes and flowering repressors FLC, AGL27/FLM and AGL31/MAF2. Required for histone H3 trimethylation on 'Lys-4' H3K4me3 at the FLC and AGL27/FLM loci. Involved in the control of seed dormancy and germination. This Arabidopsis thaliana (Mouse-ear cress) protein is Protein CTR9 homolog.